A 372-amino-acid chain; its full sequence is Aminomethyltransferase (372 aa).

This sequence belongs to the GcvT family. As to quaternary structure, the glycine cleavage system is composed of four proteins: P, T, L and H.

The enzyme catalyses N(6)-[(R)-S(8)-aminomethyldihydrolipoyl]-L-lysyl-[protein] + (6S)-5,6,7,8-tetrahydrofolate = N(6)-[(R)-dihydrolipoyl]-L-lysyl-[protein] + (6R)-5,10-methylene-5,6,7,8-tetrahydrofolate + NH4(+). Functionally, the glycine cleavage system catalyzes the degradation of glycine. This chain is Aminomethyltransferase, found in Synechocystis sp. (strain ATCC 27184 / PCC 6803 / Kazusa).